The sequence spans 348 residues: MSVPSKTQKPFLQALAGETLSPPPVWLMRQAGRYLPEYRATREEAGGFLDLCYTPKLAVEVTLQPLRRYAFDAAILFSDILVVPNAIGRQVAFKQGEGPVLDPLTSRADVEALEPGKLRERLGPVFETVRGLASAIPSTTALIGFAGAPWTVATYMLEGGSSKDFSVAKSWIYSRPDDFAALMEVLISATTDYLIAQIDAGAEAIQIFDTWAGVLPETEFHRWVIEPIGRITRALHEQRPGVPVIGFPKGAGVLYETFIRETGVDGVGLDASVPLAWAAKTLQPLCTVQGNMDPLLLVEGGPLMEQAVKRLLDTLGHGPFIFNLGHGIVPQTPPENVARLIDLVRAPR.

Substrate-binding positions include 29–33, D79, Y155, T210, and H326; that span reads RQAGR.

The protein belongs to the uroporphyrinogen decarboxylase family. As to quaternary structure, homodimer.

It is found in the cytoplasm. It carries out the reaction uroporphyrinogen III + 4 H(+) = coproporphyrinogen III + 4 CO2. It functions in the pathway porphyrin-containing compound metabolism; protoporphyrin-IX biosynthesis; coproporphyrinogen-III from 5-aminolevulinate: step 4/4. Catalyzes the decarboxylation of four acetate groups of uroporphyrinogen-III to yield coproporphyrinogen-III. The chain is Uroporphyrinogen decarboxylase from Rhodospirillum rubrum (strain ATCC 11170 / ATH 1.1.1 / DSM 467 / LMG 4362 / NCIMB 8255 / S1).